Reading from the N-terminus, the 625-residue chain is Phosphomethylpyrimidine synthase (625 aa).

Substrate is bound by residues asparagine 231, methionine 260, tyrosine 289, histidine 325, 345–347 (SRG), 386–389 (DGLR), and glutamate 425. Histidine 429 provides a ligand contact to Zn(2+). Position 452 (tyrosine 452) interacts with substrate. Histidine 493 serves as a coordination point for Zn(2+). Positions 573, 576, and 581 each coordinate [4Fe-4S] cluster.

The protein belongs to the ThiC family. As to quaternary structure, homodimer. The cofactor is [4Fe-4S] cluster.

It catalyses the reaction 5-amino-1-(5-phospho-beta-D-ribosyl)imidazole + S-adenosyl-L-methionine = 4-amino-2-methyl-5-(phosphooxymethyl)pyrimidine + CO + 5'-deoxyadenosine + formate + L-methionine + 3 H(+). It functions in the pathway cofactor biosynthesis; thiamine diphosphate biosynthesis. Functionally, catalyzes the synthesis of the hydroxymethylpyrimidine phosphate (HMP-P) moiety of thiamine from aminoimidazole ribotide (AIR) in a radical S-adenosyl-L-methionine (SAM)-dependent reaction. This Acinetobacter baumannii (strain SDF) protein is Phosphomethylpyrimidine synthase.